Consider the following 145-residue polypeptide: Leptin (145 aa).

The signal sequence occupies residues 1 to 12 (LWLWPYLFFIEA).

This sequence belongs to the leptin family.

The protein resides in the secreted. Key player in the regulation of energy balance and body weight control. Once released into the circulation, has central and peripheral effects by binding LEPR, found in many tissues, which results in the activation of several major signaling pathways. In the hypothalamus, acts as an appetite-regulating factor that induces a decrease in food intake and an increase in energy consumption by inducing anorexinogenic factors and suppressing orexigenic neuropeptides, also regulates bone mass and secretion of hypothalamo-pituitary-adrenal hormones. In the periphery, increases basal metabolism, influences reproductive function, regulates pancreatic beta-cell function and insulin secretion, is pro-angiogenic for endothelial cell and affects innate and adaptive immunity. In the arcuate nucleus of the hypothalamus, activates by depolarization POMC neurons inducing FOS and SOCS3 expression to release anorexigenic peptides and inhibits by hyperpolarization NPY neurons inducing SOCS3 with a consequent reduction on release of orexigenic peptides. In addition to its known satiety inducing effect, has a modulatory role in nutrient absorption. In the intestine, reduces glucose absorption by enterocytes by activating PKC and leading to a sequential activation of p38, PI3K and ERK signaling pathways which exerts an inhibitory effect on glucose absorption. Acts as a growth factor on certain tissues, through the activation of different signaling pathways increases expression of genes involved in cell cycle regulation such as CCND1, via JAK2-STAT3 pathway, or VEGFA, via MAPK1/3 and PI3K-AKT1 pathways. May also play an apoptotic role via JAK2-STAT3 pathway and up-regulation of BIRC5 expression. Pro-angiogenic, has mitogenic activity on vascular endothelial cells and plays a role in matrix remodeling by regulating the expression of matrix metalloproteinases (MMPs) and tissue inhibitors of metalloproteinases (TIMPs). In innate immunity, modulates the activity and function of neutrophils by increasing chemotaxis and the secretion of oxygen radicals. Increases phagocytosis by macrophages and enhances secretion of pro-inflammatory mediators. Increases cytotoxic ability of NK cells. Plays a pro-inflammatory role, in synergy with IL1B, by inducing NOS2 which promotes the production of IL6, IL8 and Prostaglandin E2, through a signaling pathway that involves JAK2, PI3K, MAP2K1/MEK1 and MAPK14/p38. In adaptive immunity, promotes the switch of memory T-cells towards T helper-1 cell immune responses. Increases CD4(+)CD25(-) T-cell proliferation and reduces autophagy during TCR (T-cell receptor) stimulation, through MTOR signaling pathway activation and BCL2 up-regulation. The polypeptide is Leptin (LEP) (Equus caballus (Horse)).